We begin with the raw amino-acid sequence, 163 residues long: uncharacterized protein (163 aa).

The tract at residues 30-163 (GNENTSVSSD…IYKKLGKKKR (134 aa)) is disordered. The span at 88 to 118 (ERQLQKKKEAEKIEGGKNHDNLKRKLNKVGD) shows a compositional bias: basic and acidic residues. Over residues 119–133 (ELNEQQSDTDDDDDD) the composition is skewed to acidic residues. Ser-125 is subject to Phosphoserine. The residue at position 127 (Thr-127) is a Phosphothreonine.

Its subcellular location is the nucleus. The protein resides in the nucleolus. This is an uncharacterized protein from Schizosaccharomyces pombe (strain 972 / ATCC 24843) (Fission yeast).